The sequence spans 73 residues: Beta-defensin 40 (73 aa).

An N-terminal signal peptide occupies residues 1–23 (MKISCFLLMIFFLSCFQINPVAV). Disulfide bonds link Cys-29/Cys-58, Cys-36/Cys-51, and Cys-41/Cys-59.

The protein belongs to the beta-defensin family. As to expression, only expressed in epididymis (corpus, cauda and caput).

The protein localises to the secreted. In terms of biological role, has antibacterial activity. The polypeptide is Beta-defensin 40 (Defb40) (Mus musculus (Mouse)).